Reading from the N-terminus, the 457-residue chain is 4-hydroxybenzoate transporter PcaK (457 aa).

The Cytoplasmic segment spans residues 1-34 (MPKEANMASQDYATQRSSLDAQALINDAPLSRYQ). Residues 35 to 55 (WLIAIVCFLIVFVDGIDTAAM) traverse the membrane as a helical segment. The Periplasmic segment spans residues 56–72 (GFIAPALAQDWGVDRSQ). The chain crosses the membrane as a helical span at residues 73 to 93 (LGPVMSAALGGMIIGALVSGP). At 94 to 101 (TADRFGRK) the chain is on the cytoplasmic side. The chain crosses the membrane as a helical span at residues 102-122 (IVLSMSMLVFGGFTLACAYST). The Periplasmic segment spans residues 123 to 128 (NLDSLV). The chain crosses the membrane as a helical span at residues 129–149 (IFRFLTGIGLGAAMPNATTLF). Over 150-168 (SEYCPARIRSLLVTCMFCG) the chain is Cytoplasmic. Residues 169–189 (YNLGMAIGGFISSWLIPAFGW) traverse the membrane as a helical segment. Residues 190–191 (HS) are Periplasmic-facing. Residues 192-212 (LFLLGGWAPLILMLLVIFFLP) traverse the membrane as a helical segment. Topologically, residues 213–274 (ESYRFLIVKG…LFSAKYVKGT (62 aa)) are cytoplasmic. The chain crosses the membrane as a helical span at residues 275–295 (VLLWVTYFMGLVMIYLLTSWL). Residues 296 to 310 (PTLMRETGASLERAA) lie on the Periplasmic side of the membrane. A helical membrane pass occupies residues 311–331 (FLGGLFQFGGVLSALFIGWAM). Topologically, residues 332-338 (DRFNPNR) are cytoplasmic. The helical transmembrane segment at 339–359 (IIAGFYLAAGIFAVIVGQSLS) threads the bilayer. Topologically, residues 360 to 363 (NPTL) are periplasmic. A helical membrane pass occupies residues 364-384 (LALFILCAGIAVNGAQSSMPV). The Cytoplasmic segment spans residues 385-400 (LSARFYPTQCRATGVA). A helical membrane pass occupies residues 401-421 (WMSGIGRFGAVFGAWIGAVLL). Topologically, residues 422–426 (GNNWS) are periplasmic. Residues 427-447 (FTMILSMLIIPAAAAAIAIFV) traverse the membrane as a helical segment. The Cytoplasmic portion of the chain corresponds to 448-457 (KSLVAHTDAT).

This sequence belongs to the major facilitator superfamily. Aromatic acid:H(+) symporter (AAHS) (TC 2.A.1.15) family. Homotrimer.

It localises to the cell inner membrane. Uptake of 4-hydroxybenzoate (4-HB). Can also transport a variety of aromatic acids with hydroxyl substitutions at the 2-, 3- and 4-positions, such as salicylate, 2,4-dihydroxybenzoate, protocatechuate, 3-hydroxybenzoate, vanillate and gentisate. The polypeptide is 4-hydroxybenzoate transporter PcaK (Acinetobacter baylyi (strain ATCC 33305 / BD413 / ADP1)).